The following is a 147-amino-acid chain: MKVIFQQDVKGKGKKGEVKNVSEGYARNYLIPNGLAVEATSANMKNLNAKKKSEEKKKEEELQEAKAYQTELEALTLELKAKSGEGGRLFGAISTKQIAEALSREGKKVDKRKILLNDPIRSLGYTNVPIKIHPEVTATVKVHVVEE.

It belongs to the bacterial ribosomal protein bL9 family.

Functionally, binds to the 23S rRNA. The polypeptide is Large ribosomal subunit protein bL9 (Halalkalibacterium halodurans (strain ATCC BAA-125 / DSM 18197 / FERM 7344 / JCM 9153 / C-125) (Bacillus halodurans)).